The chain runs to 130 residues: Gonadotropin subunit beta-1 (130 aa).

The N-terminal stretch at 1 to 18 (MRMRFVVMVILLPALMMS) is a signal peptide. 5 disulfides stabilise this stretch: Cys26-Cys74, Cys40-Cys89, Cys51-Cys105, Cys55-Cys107, and Cys110-Cys117. Asn30 carries an N-linked (GlcNAc...) asparagine glycan.

Belongs to the glycoprotein hormones subunit beta family. Heterodimer of an alpha and a beta chain.

It is found in the secreted. Its function is as follows. Involved in gametogenesis and steroidogenesis. The protein is Gonadotropin subunit beta-1 (cgba) of Carassius auratus (Goldfish).